The primary structure comprises 284 residues: D-tagatose-1,6-bisphosphate aldolase subunit GatY (284 aa).

Aspartate 82 acts as the Proton donor in catalysis. The Zn(2+) site is built by histidine 83 and histidine 180. Glycine 181 serves as a coordination point for dihydroxyacetone phosphate. Residue histidine 208 participates in Zn(2+) binding. Dihydroxyacetone phosphate contacts are provided by residues 209 to 211 (GAS) and 230 to 233 (NVAT).

It belongs to the class II fructose-bisphosphate aldolase family. TagBP aldolase GatY subfamily. In terms of assembly, forms a complex with GatZ. Zn(2+) serves as cofactor.

The enzyme catalyses D-tagatofuranose 1,6-bisphosphate = D-glyceraldehyde 3-phosphate + dihydroxyacetone phosphate. It participates in carbohydrate metabolism; D-tagatose 6-phosphate degradation; D-glyceraldehyde 3-phosphate and glycerone phosphate from D-tagatose 6-phosphate: step 2/2. Catalytic subunit of the tagatose-1,6-bisphosphate aldolase GatYZ, which catalyzes the reversible aldol condensation of dihydroxyacetone phosphate (DHAP or glycerone-phosphate) with glyceraldehyde 3-phosphate (G3P) to produce tagatose 1,6-bisphosphate (TBP). Requires GatZ subunit for full activity and stability. Is involved in the catabolism of galactitol. The chain is D-tagatose-1,6-bisphosphate aldolase subunit GatY from Escherichia coli O7:K1 (strain IAI39 / ExPEC).